A 267-amino-acid chain; its full sequence is Hydroxyethylthiazole kinase (267 aa).

A substrate-binding site is contributed by M46. ATP-binding residues include R121 and T167. A194 is a binding site for substrate.

Belongs to the Thz kinase family. It depends on Mg(2+) as a cofactor.

The enzyme catalyses 5-(2-hydroxyethyl)-4-methylthiazole + ATP = 4-methyl-5-(2-phosphooxyethyl)-thiazole + ADP + H(+). Its pathway is cofactor biosynthesis; thiamine diphosphate biosynthesis; 4-methyl-5-(2-phosphoethyl)-thiazole from 5-(2-hydroxyethyl)-4-methylthiazole: step 1/1. In terms of biological role, catalyzes the phosphorylation of the hydroxyl group of 4-methyl-5-beta-hydroxyethylthiazole (THZ). In Rhizobium leguminosarum bv. trifolii (strain WSM2304), this protein is Hydroxyethylthiazole kinase.